The sequence spans 393 residues: Protein TsgA (393 aa).

Helical transmembrane passes span 11–31, 51–71, 78–98, 101–121, 134–154, 162–182, 206–226, 245–265, 273–293, 298–318, 332–352, and 361–381; these read WISFLSYALTGALVIVTGMVM, FLNAGILISIFLNAWLMEIVP, FGFILMVLAVAGLMFSHSLAL, AAMFVLGLVSGITMSIGTFLI, LLFTDSFFSMAGMIFPMVAAF, WYWVYACIGLVYLAIFILTFG, IGVLFLAVAALCYILGQLGFI, ALVSDFWMSYMFGMWAFSFIL, ILTVLAGMAAVLMYLFITGTQ, WFILTLGFFSSAIYTSIITLG, FILTCGTIGTMLTFVVTGPIV, and LLTANGLYAVVFVMCFALGFV.

It belongs to the major facilitator superfamily. TsgA family.

The protein resides in the cell inner membrane. This is Protein TsgA from Salmonella gallinarum (strain 287/91 / NCTC 13346).